The chain runs to 616 residues: Dihydroxy-acid dehydratase (616 aa).

A Mg(2+)-binding site is contributed by Asp81. Cys122 contributes to the [2Fe-2S] cluster binding site. Residues Asp123 and Lys124 each coordinate Mg(2+). N6-carboxylysine is present on Lys124. Cys195 contributes to the [2Fe-2S] cluster binding site. Position 491 (Glu491) interacts with Mg(2+). Residue Ser517 is the Proton acceptor of the active site.

This sequence belongs to the IlvD/Edd family. In terms of assembly, homodimer. [2Fe-2S] cluster is required as a cofactor. The cofactor is Mg(2+).

The enzyme catalyses (2R)-2,3-dihydroxy-3-methylbutanoate = 3-methyl-2-oxobutanoate + H2O. The catalysed reaction is (2R,3R)-2,3-dihydroxy-3-methylpentanoate = (S)-3-methyl-2-oxopentanoate + H2O. It participates in amino-acid biosynthesis; L-isoleucine biosynthesis; L-isoleucine from 2-oxobutanoate: step 3/4. Its pathway is amino-acid biosynthesis; L-valine biosynthesis; L-valine from pyruvate: step 3/4. Functions in the biosynthesis of branched-chain amino acids. Catalyzes the dehydration of (2R,3R)-2,3-dihydroxy-3-methylpentanoate (2,3-dihydroxy-3-methylvalerate) into 2-oxo-3-methylpentanoate (2-oxo-3-methylvalerate) and of (2R)-2,3-dihydroxy-3-methylbutanoate (2,3-dihydroxyisovalerate) into 2-oxo-3-methylbutanoate (2-oxoisovalerate), the penultimate precursor to L-isoleucine and L-valine, respectively. The sequence is that of Dihydroxy-acid dehydratase from Salmonella paratyphi A (strain ATCC 9150 / SARB42).